The chain runs to 156 residues: Cyclic pyranopterin monophosphate synthase (156 aa).

Substrate is bound by residues 75 to 77 and 111 to 112; these read LCH and ME. Aspartate 126 is a catalytic residue.

Belongs to the MoaC family. As to quaternary structure, homohexamer; trimer of dimers.

It carries out the reaction (8S)-3',8-cyclo-7,8-dihydroguanosine 5'-triphosphate = cyclic pyranopterin phosphate + diphosphate. Its pathway is cofactor biosynthesis; molybdopterin biosynthesis. In terms of biological role, catalyzes the conversion of (8S)-3',8-cyclo-7,8-dihydroguanosine 5'-triphosphate to cyclic pyranopterin monophosphate (cPMP). This is Cyclic pyranopterin monophosphate synthase from Erythrobacter litoralis (strain HTCC2594).